A 488-amino-acid chain; its full sequence is ATP synthase subunit beta, chloroplastic (488 aa).

170 to 177 (GGAGVGKT) provides a ligand contact to ATP.

It belongs to the ATPase alpha/beta chains family. In terms of assembly, F-type ATPases have 2 components, CF(1) - the catalytic core - and CF(0) - the membrane proton channel. CF(1) has five subunits: alpha(3), beta(3), gamma(1), delta(1), epsilon(1). CF(0) has four main subunits: a(1), b(1), b'(1) and c(9-12).

The protein localises to the plastid. It localises to the chloroplast thylakoid membrane. It catalyses the reaction ATP + H2O + 4 H(+)(in) = ADP + phosphate + 5 H(+)(out). Its function is as follows. Produces ATP from ADP in the presence of a proton gradient across the membrane. The catalytic sites are hosted primarily by the beta subunits. The protein is ATP synthase subunit beta, chloroplastic of Picea abies (Norway spruce).